We begin with the raw amino-acid sequence, 84 residues long: Tenecin-1 (84 aa).

The first 19 residues, 1 to 19 (MKLTIFALVACFFILQIAA), serve as a signal peptide directing secretion. The propeptide occupies 20-41 (FPLEEAATAEEIEQGEHIRVKR). Cystine bridges form between Cys-44/Cys-75, Cys-61/Cys-81, and Cys-65/Cys-83.

It belongs to the invertebrate defensin family. Type 1 subfamily.

The protein localises to the secreted. In terms of biological role, bactericidal protein produced in response to injury. It is cytotoxic to Gram-positive bacteria. This chain is Tenecin-1, found in Tenebrio molitor (Yellow mealworm beetle).